We begin with the raw amino-acid sequence, 299 residues long: Transcription elongation factor A protein 2 (299 aa).

The 78-residue stretch at 6–83 (EEIARIARRL…KSWKKLLDAS (78 aa)) folds into the TFIIS N-terminal domain. Lysine 58 participates in a covalent cross-link: Glycyl lysine isopeptide (Lys-Gly) (interchain with G-Cter in ubiquitin). A phosphoserine mark is found at serine 60 and serine 100. A disordered region spans residues 86–128 (KARERGRGMPLPTSSRDASEAPDPSRKRPELPRAPSTPRITTF). Basic and acidic residues predominate over residues 102–116 (DASEAPDPSRKRPEL). The TFIIS central domain occupies 138-254 (VRNKCREMLT…EHQMARTGGT (117 aa)). The TFIIS-type zinc-finger motif lies at 257 to 297 (DLFTCGKCRKKNCTYTQVQTRSSDEPMTTFVVCNECGNRWK). Zn(2+) contacts are provided by cysteine 261, cysteine 264, cysteine 289, and cysteine 292.

This sequence belongs to the TFS-II family. As to quaternary structure, interacts with the basal transcription factor GTF2B. Interacts with REXO1. In terms of tissue distribution, testis and ovary specific.

The protein localises to the nucleus. Necessary for efficient RNA polymerase II transcription elongation past template-encoded arresting sites. The arresting sites in DNA have the property of trapping a certain fraction of elongating RNA polymerases that pass through, resulting in locked ternary complexes. Cleavage of the nascent transcript by S-II allows the resumption of elongation from the new 3'-terminus. The chain is Transcription elongation factor A protein 2 (TCEA2) from Homo sapiens (Human).